The sequence spans 535 residues: Transmembrane protein 151 homolog (535 aa).

The next 3 helical transmembrane spans lie at 27–47 (GYGKCLICSLLLVLCFFYATY), 73–93 (YNFVPIVFGLMLYIVYLMECW), and 254–274 (PWFLHPIVFWFFSILVLSWPL). The disordered stretch occupies residues 498-535 (ASISHSSSKDLKSLTLKNNNGAANNNNNNNNENPEEQP). The segment covering 510–529 (SLTLKNNNGAANNNNNNNNE) has biased composition (low complexity).

This sequence belongs to the TMEM151 family.

The protein resides in the membrane. In Caenorhabditis briggsae, this protein is Transmembrane protein 151 homolog.